The chain runs to 269 residues: Ubiquinone/menaquinone biosynthesis C-methyltransferase UbiE (269 aa).

Residues threonine 92, aspartate 113, and 141–142 (NA) contribute to the S-adenosyl-L-methionine site.

Belongs to the class I-like SAM-binding methyltransferase superfamily. MenG/UbiE family.

The enzyme catalyses a 2-demethylmenaquinol + S-adenosyl-L-methionine = a menaquinol + S-adenosyl-L-homocysteine + H(+). It catalyses the reaction a 2-methoxy-6-(all-trans-polyprenyl)benzene-1,4-diol + S-adenosyl-L-methionine = a 5-methoxy-2-methyl-3-(all-trans-polyprenyl)benzene-1,4-diol + S-adenosyl-L-homocysteine + H(+). It participates in quinol/quinone metabolism; menaquinone biosynthesis; menaquinol from 1,4-dihydroxy-2-naphthoate: step 2/2. It functions in the pathway cofactor biosynthesis; ubiquinone biosynthesis. In terms of biological role, methyltransferase required for the conversion of demethylmenaquinol (DMKH2) to menaquinol (MKH2) and the conversion of 2-polyprenyl-6-methoxy-1,4-benzoquinol (DDMQH2) to 2-polyprenyl-3-methyl-6-methoxy-1,4-benzoquinol (DMQH2). This chain is Ubiquinone/menaquinone biosynthesis C-methyltransferase UbiE, found in Brucella canis (strain ATCC 23365 / NCTC 10854 / RM-666).